The sequence spans 252 residues: DNA-(apurinic or apyrimidinic site) lyase Nei2 (252 aa).

Pro-2 functions as the Schiff-base intermediate with DNA in the catalytic mechanism. Residue Glu-3 is the Proton donor of the active site. The active-site Proton donor (in beta-elimination) is the Lys-51. An FPG-type zinc finger spans residues 216 to 250 (WVYGRAGEPCRRCGTLIQTDRGGERVTYWCPVCQT). Zn(2+) contacts are provided by Cys-225, Cys-228, Cys-245, and Cys-248.

It belongs to the FPG family. As to quaternary structure, monomer. It depends on Zn(2+) as a cofactor.

The catalysed reaction is 2'-deoxyribonucleotide-(2'-deoxyribose 5'-phosphate)-2'-deoxyribonucleotide-DNA = a 3'-end 2'-deoxyribonucleotide-(2,3-dehydro-2,3-deoxyribose 5'-phosphate)-DNA + a 5'-end 5'-phospho-2'-deoxyribonucleoside-DNA + H(+). Functionally, involved in base excision repair of DNA damaged by oxidation or by mutagenic agents. Acts as DNA glycosylase that recognizes and removes damaged bases. Involved in the repair of psoralen-UVA DNA cross-links. A lyase that cleaves single-stranded (ss)DNA but not double-stranded (ds)DNA with an abasic site. Has 5-hydroxyuracil (5-OH-U) glycosylase activity on ssDNA with 5-OH-U, with 10-fold less activity on dsDNA, but weak to no uracil glycosylase activity. Has weak glycosylase activity on thymine glycol and dihydrothymine residues in ssDNA. Cleaves the DNA backbone by beta-delta elimination to generate a single-strand break at the site of the removed base with both 3'- and 5'-phosphates. The protein is DNA-(apurinic or apyrimidinic site) lyase Nei2 of Mycolicibacterium smegmatis (strain ATCC 700084 / mc(2)155) (Mycobacterium smegmatis).